Consider the following 1069-residue polypeptide: Regulator of nonsense transcripts 1 (1069 aa).

The segment at 1–86 (MDDSDDEYSR…SEKSLTEEQH (86 aa)) is disordered. Residues 28–50 (IGNTQDSQFAYEQFSVPTQSSQA) show a composition bias toward polar residues. Residues 51–65 (TDLLPGGTDGTTNDL) are compositionally biased toward low complexity. Residues 77–86 (SEKSLTEEQH) show a composition bias toward basic and acidic residues. One can recognise a Upf1 CH-rich domain in the interval 87-244 (EQKLPEHACR…VRMEELWRDH (158 aa)). 12 residues coordinate Zn(2+): Cys-95, Cys-98, Cys-109, Cys-112, Cys-117, His-127, His-131, His-137, Cys-155, Cys-158, Cys-181, and Cys-185. Residues 95–127 (CRYCGISDPLCVAKCTVCRKWFCNSNDGTSGGH) are C3H. A CC/SHH/C region spans residues 109–137 (CTVCRKWFCNSNDGTSGGHIVHHMVRSQH). The C4 stretch occupies residues 155–185 (CYRCGSKNVFNLGFIPGKKDQVVVIICRTPC). ATP is bound by residues Gln-450, 467 to 474 (GPPGTGKT), Gln-639, Tyr-676, and Glu-807. The disordered stretch occupies residues 966–1069 (ARNQKDRRRG…MDDLLFSQDC (104 aa)). Positions 991–1013 (SQGMMSQQSQQYPPQGASSQSQY) are enriched in low complexity.

This sequence belongs to the DNA2/NAM7 helicase family. In terms of processing, phosphorylated probably by smg-1. Smg-3 and smg-4 are required for phosphorylation.

Its subcellular location is the cytoplasm. The catalysed reaction is ATP + H2O = ADP + phosphate + H(+). Functionally, RNA-dependent helicase required for nonsense-mediated decay (NMD) of aberrant mRNAs containing premature stop codons and modulates the expression level of normal mRNAs. Is recruited to mRNAs upon translation termination and undergoes a cycle of phosphorylation and dephosphorylation; its phosphorylation appears to be a key step in NMD. The formation of an smg-2-3-4 surveillance complex is believed to activate NMD. This is Regulator of nonsense transcripts 1 (smg-2) from Caenorhabditis elegans.